The primary structure comprises 568 residues: Tyrosine-protein kinase transforming protein Src (568 aa).

The interval 1 to 58 (MGSSKSKPKDPSQRRRSLEPPDSTHHGGFPASQTPNKTAAPDTHRTPSRSFGTVATEP) is disordered. A lipid anchor (N-myristoyl glycine; by host) is attached at Gly-2. Residues 7–25 (KPKDPSQRRRSLEPPDSTH) show a composition bias toward basic and acidic residues. Positions 81–142 (GGVTTFVALY…PSNYVAPSDS (62 aa)) constitute an SH3 domain. An SH2 domain is found at 148-245 (WYFGKITRRE…GLCHRLTNVC (98 aa)). The Protein kinase domain occupies 267 to 520 (LRLEVKLGQG…YLQAFLEDYF (254 aa)). Residues 273 to 281 (LGQGCFGEV) and Lys-295 each bind ATP. Asp-386 functions as the Proton acceptor in the catalytic mechanism. Tyr-416 carries the post-translational modification Phosphotyrosine; by autocatalysis.

This sequence belongs to the protein kinase superfamily. Tyr protein kinase family. SRC subfamily. Post-translationally, the phosphorylated form is termed pp60v-src.

The enzyme catalyses L-tyrosyl-[protein] + ATP = O-phospho-L-tyrosyl-[protein] + ADP + H(+). Its function is as follows. This phosphoprotein, required for both the initiation and the maintenance of neoplastic transformation, is a protein kinase that catalyzes the phosphorylation of tyrosine residues in vitro. The chain is Tyrosine-protein kinase transforming protein Src (V-SRC) from Galliformes.